Consider the following 1116-residue polypeptide: DUB-associated factor 1 (1116 aa).

WD repeat units follow at residues 21–62 (AHIL…NEPE), 91–132 (KNSD…DHDD), 160–200 (VHDG…EKMA), 219–262 (SMSP…EVIR), 266–305 (AHRT…DQTT), 387–426 (KKYG…FSVN), and 428–466 (GGFA…LLNT). Positions 578–600 (LDTGYNSESKKNNKDKKRKSTFK) are disordered. S668 bears the Phosphoserine mark. T693 carries the phosphothreonine modification. Residues 747-776 (ISSQDLPSNNTHNKLRSSENSRANSTSTLE) are compositionally biased toward polar residues. Disordered stretches follow at residues 747-784 (ISSQ…KKPE) and 963-994 (FISA…PSTQ). The span at 967-987 (SDTTESSGNDSSDSSLGNGNE) shows a compositional bias: low complexity.

Interacts (via its WD repeats) with ubiquitin.

It localises to the cytoplasm. Functionally, ubiquitin-binding protein involved in the resistance to phenanthroline, sanguinarine, nordihydroguaiaretic acid (NDGA), isopropyl (N-3-chloro-phenyl)-carbamate (IPCPC) and guanosine 5'-O-(2-thiodiphosphate). This chain is DUB-associated factor 1, found in Saccharomyces cerevisiae (strain ATCC 204508 / S288c) (Baker's yeast).